We begin with the raw amino-acid sequence, 38 residues long: Cytochrome b6-f complex subunit 5 (38 aa).

A helical transmembrane segment spans residues 5-25 (LVLGIVLGLIPITLAGLFVAA).

It belongs to the PetG family. As to quaternary structure, the 4 large subunits of the cytochrome b6-f complex are cytochrome b6, subunit IV (17 kDa polypeptide, PetD), cytochrome f and the Rieske protein, while the 4 small subunits are PetG, PetL, PetM and PetN. The complex functions as a dimer.

The protein localises to the cellular thylakoid membrane. Its function is as follows. Component of the cytochrome b6-f complex, which mediates electron transfer between photosystem II (PSII) and photosystem I (PSI), cyclic electron flow around PSI, and state transitions. PetG is required for either the stability or assembly of the cytochrome b6-f complex. The sequence is that of Cytochrome b6-f complex subunit 5 from Microcystis aeruginosa (strain NIES-843 / IAM M-2473).